The following is a 442-amino-acid chain: Elongation factor 1-alpha (442 aa).

The region spanning 5–228 (KTHINIVVIG…DSVTPPERPV (224 aa)) is the tr-type G domain. A G1 region spans residues 14 to 21 (GHVDSGKS). 14 to 21 (GHVDSGKS) serves as a coordination point for GTP. The G2 stretch occupies residues 70–74 (GITID). The interval 91 to 94 (DAPG) is G3. GTP-binding positions include 91 to 95 (DAPGH) and 153 to 156 (NKMD). A G4 region spans residues 153–156 (NKMD). The tract at residues 192–194 (SGF) is G5.

Belongs to the TRAFAC class translation factor GTPase superfamily. Classic translation factor GTPase family. EF-Tu/EF-1A subfamily.

It is found in the cytoplasm. Its function is as follows. This protein promotes the GTP-dependent binding of aminoacyl-tRNA to the A-site of ribosomes during protein biosynthesis. The chain is Elongation factor 1-alpha from Entamoeba histolytica (strain ATCC 30459 / HM-1:IMSS / ABRM).